The primary structure comprises 186 residues: Secreted chorismate mutase (186 aa).

A signal peptide spans 1 to 30 (MQPTHTLTRLTVIGKLIIASSFFLSLAVQA). The region spanning 31–107 (QQCGQTAPLI…AAKAIQYRYR (77 aa)) is the Chorismate mutase domain. Cysteines 33 and 148 form a disulfide. Residues Arg43, Lys54, Asp63, 99 to 103 (AKAIQ), and Arg127 each bind substrate.

Homodimer.

It localises to the periplasm. The catalysed reaction is chorismate = prephenate. It functions in the pathway metabolic intermediate biosynthesis; prephenate biosynthesis; prephenate from chorismate: step 1/1. In terms of biological role, catalyzes the Claisen rearrangement of chorismate to prephenate. May play some role in the pathogenicity. This chain is Secreted chorismate mutase (pheA2), found in Yersinia pestis.